Reading from the N-terminus, the 349-residue chain is Peptide chain release factor 1 (349 aa).

At Gln-233 the chain carries N5-methylglutamine.

It belongs to the prokaryotic/mitochondrial release factor family. In terms of processing, methylated by PrmC. Methylation increases the termination efficiency of RF1.

The protein localises to the cytoplasm. Its function is as follows. Peptide chain release factor 1 directs the termination of translation in response to the peptide chain termination codons UAG and UAA. The sequence is that of Peptide chain release factor 1 from Pelotomaculum thermopropionicum (strain DSM 13744 / JCM 10971 / SI).